The primary structure comprises 1147 residues: Sterol regulatory element-binding protein 1 (1147 aa).

Positions 1–60 are transcriptional activation (acidic); that stretch reads MDEPPFSEAALEQALGEPCDLDAALLTDIEDMLQLINNQDSDFPGLFDPPYAGSGAGGTD. Residues 1–487 are Cytoplasmic-facing; the sequence is MDEPPFSEAA…HSRGMLDRSR (487 aa). The 9aaTAD signature appears at 27-35; it reads TDIEDMLQL. A disordered region spans residues 39 to 193; that stretch reads QDSDFPGLFD…PLPGLPLASP (155 aa). 2 stretches are compositionally biased toward low complexity: residues 62–71 and 78–95; these read ASPDTSSPGS and TLSS…AAPS. Residues 96–105 are compositionally biased toward pro residues; it reads PLSPPQPAPT. Serine 98 and serine 117 each carry phosphoserine. Residues 170–190 are compositionally biased toward low complexity; the sequence is GGFSTGSPPGNTQQPLPGLPL. The interval 234 to 497 is interaction with LMNA; the sequence is QQVPVLLQPH…LALCTLVFLC (264 aa). The bHLH domain maps to 323–373; that stretch reads EKRTAHNAIEKRYRSSINDKIIELKDLVVGTEAKLNKSAVLRKAIDYIRFL. A phosphoserine; by SIK1 mark is found at serine 337 and serine 338. The segment at 373–394 is leucine-zipper; it reads LQHSNQKLKQENLSLRTAVHKS. Serine 396 is modified (phosphoserine; by AMPK). Serine 402 is modified (phosphoserine; by SIK1). Residues 421–479 form a disordered region; the sequence is VEDTLTPPPSDAGSPFQSSPLSLGSRGSGSGGSGSDSEPDSPVFEDSKAKPEQRPSLHS. Serine 457 is modified (phosphoserine). Residues 465–479 show a composition bias toward basic and acidic residues; that stretch reads EDSKAKPEQRPSLHS. A helical membrane pass occupies residues 488-508; it reads LALCTLVFLCLSCNPLASLLG. The Lumenal segment spans residues 509–547; that stretch reads ARGLPSPSDTTSVYHSPGRNVLGTESRDGPGWAQWLLPP. A helical transmembrane segment spans residues 548-568; sequence VVWLLNGLLVLVSLVLLFVYG. Topologically, residues 569–1147 are cytoplasmic; the sequence is EPVTRPHSGP…LGGGTTVTSS (579 aa). Serine 1060 carries the post-translational modification Phosphoserine.

This sequence belongs to the SREBP family. As to quaternary structure, forms a tight complex with SCAP, the SCAP-SREBP complex, in the endoplasmic reticulum membrane and the Golgi apparatus. Interacts with PAQR3; the interaction anchors the SCAP-SREBP complex to the Golgi apparatus in low cholesterol conditions. In terms of assembly, efficient DNA binding of the soluble transcription factor fragment requires dimerization with another bHLH protein. Interacts with CEBPA, the interaction produces a transcriptional synergy. Interacts with LMNA. Post-translationally, processed in the Golgi apparatus, releasing the protein from the membrane. At low cholesterol the SCAP-SREBP complex is recruited into COPII vesicles for export from the endoplasmic reticulum. In the Golgi, complex SREBPs are cleaved sequentially by site-1 (MBTPS1, S1P) and site-2 (MBTPS2, S2P) protease. The first cleavage by site-1 protease occurs within the luminal loop, the second cleavage by site-2 protease occurs within the first transmembrane domain, releasing the transcription factor from the Golgi membrane. Phosphorylated by AMPK, leading to suppress protein processing and nuclear translocation, and repress target gene expression. Phosphorylation at Ser-402 by SIK1 represses activity possibly by inhibiting DNA-binding. In terms of processing, SCAP-free SREBF1 is ubiquitinated by the BCR(ARMC5) complex, leading to its degradation. Post-translationally, ubiquitinated; the nuclear form has a rapid turnover and is rapidly ubiquitinated and degraded by the proteasome in the nucleus. Expressed in a wide variety of tissues, most abundant in liver and adrenal gland. In fetal tissues lung and liver shows highest expression. In terms of tissue distribution, predominates in hepatoma cell lines. Also expressed in kidney, brain, white fat, and muscle. As to expression, predominantly expressed in liver and adipose tissues. Also expressed in kidney, brain, white fat, and muscle.

It is found in the endoplasmic reticulum membrane. Its subcellular location is the golgi apparatus membrane. The protein resides in the cytoplasmic vesicle. It localises to the COPII-coated vesicle membrane. The protein localises to the nucleus. Its activity is regulated as follows. Activation by cleavage is down-regulated upon activation of SIRT3-dependent PRKAA1/AMPK-alpha signaling cascade which leads to inhibition of ATP-consuming lipogenesis to restore cellular energy balance. Precursor of the transcription factor form (Processed sterol regulatory element-binding protein 1), which is embedded in the endoplasmic reticulum membrane. Low sterol concentrations promote processing of this form, releasing the transcription factor form that translocates into the nucleus and activates transcription of genes involved in cholesterol biosynthesis and lipid homeostasis. In terms of biological role, key transcription factor that regulates expression of genes involved in cholesterol biosynthesis and lipid homeostasis. Binds to the sterol regulatory element 1 (SRE-1) (5'-ATCACCCCAC-3'). Has dual sequence specificity binding to both an E-box motif (5'-ATCACGTGA-3') and to SRE-1 (5'-ATCACCCCAC-3'). Regulates the promoters of genes involved in cholesterol biosynthesis and the LDL receptor (LDLR) pathway of sterol regulation. Functionally, isoform expressed only in select tissues, which has higher transcriptional activity compared to SREBP-1C. Able to stimulate both lipogenic and cholesterogenic gene expression. Has a role in the nutritional regulation of fatty acids and triglycerides in lipogenic organs such as the liver. Required for innate immune response in macrophages by regulating lipid metabolism. Its function is as follows. Predominant isoform expressed in most tissues, which has weaker transcriptional activity compared to isoform SREBP-1A. Primarily controls expression of lipogenic gene. Strongly activates global lipid synthesis in rapidly growing cells. The absence of Golgi proteolytic processing requirement makes this isoform constitutively active in transactivation of lipogenic gene promoters. The polypeptide is Sterol regulatory element-binding protein 1 (Homo sapiens (Human)).